Reading from the N-terminus, the 153-residue chain is Ribosome maturation factor RimP (153 aa).

This sequence belongs to the RimP family.

The protein resides in the cytoplasm. In terms of biological role, required for maturation of 30S ribosomal subunits. The chain is Ribosome maturation factor RimP from Acidithiobacillus ferrooxidans (strain ATCC 53993 / BNL-5-31) (Leptospirillum ferrooxidans (ATCC 53993)).